A 626-amino-acid polypeptide reads, in one-letter code: MAFVSIAPLASRCCVHKSFVSSREVKPLCRTIPTLGRCRRGKTVTPSISMCWTATVLDDGVQRRIANHHSNLWDDSFIQSLSTPYGETSYLERADKLIGEVKEIINSISVEDGELITPLNDLIQRLSIVDNIERLGIDRHFKNEIKSALDYVYSYWNEKGIGCGRESVITDLNSTALGLRTLRLHGYPVSSDVFEQFKEQNGQFACSAIQTEGEIKKVLNLFRASLIAFPGEKVMEEAEIFSTIYLKEALLKIPVCSLSREIAYVLEYGWHMNLPRLEARNYIDVFGQDPIYLTLNMRTQKLIELAKLEFNIFHSLQQEELKHVSRWWKDSGFSQMAYARHRHVEFYTLASCIAIDPQHSSFRLGFTKITYLGTVLDDIYDTFGTMDELELFTAAVKRWHPSAAEGLPEYMKGVYMMFYETVNEMAREAEKCQGRDTLNYARQALEAYIDSYMKEAKWISSGFLPTFEEYLDNGKVSFGYRIGTLQPILTLGIPFPHHILQEIDFPSRLNDLAGSILRLKGDIHSYQAERSRGEESSGISCYMKDNPESTEEDAVTYINAMINRLLKELNWEFLKPHSNVPITSKKHAFDILRAFYHLYKDRDGFSVTRNEIRNLVMTTVIEHVPL.

Residues M1–S21 constitute a chloroplast transit peptide. The Mg(2+) site is built by D377, D381, and E529. The short motif at D377 to D381 is the DDXXD motif element.

This sequence belongs to the terpene synthase family. Tpsd subfamily. It depends on Mg(2+) as a cofactor. The cofactor is Mn(2+).

It is found in the plastid. The protein localises to the chloroplast. The catalysed reaction is (2E)-geranyl diphosphate + H2O = (R)-linalool + diphosphate. The protein operates within terpene metabolism; oleoresin biosynthesis. Terpene synthase (mono-TPS) involved in the biosynthesis of monoterpene natural products included in conifer oleoresin secretions and volatile emissions; these compounds contribute to biotic and abiotic stress defense against herbivores and pathogens. Catalyzes the conversion of (2E)-geranyl diphosphate (GPP) to (R)-linalool. The protein is (R)-linalool synthase 2, chloroplastic of Picea sitchensis (Sitka spruce).